The chain runs to 2169 residues: Voltage-dependent L-type calcium channel subunit alpha-1C (2169 aa).

At 1 to 154 the chain is on the cytoplasmic side; it reads MIRAFAQPST…RACISIVEWK (154 aa). The interval 77–98 is calmodulin-binding; the sequence is GAALSWLAAIDAARQAKLMGSA. Residues 104–128 form a disordered region; that stretch reads STVSSTQRKRQQYGKPKKQGGTTAT. Residues 110-121 are compositionally biased toward basic residues; the sequence is QRKRQQYGKPKK. An I repeat occupies 141 to 438; that stretch reads NPIRRACISI…LVLGVLSGEF (298 aa). The helical transmembrane segment at 155 to 173 threads the bilayer; the sequence is PFEIIILLTIFANCVALAI. Over 174-188 the chain is Extracellular; the sequence is YIPFPEDDSNATNSN. N183 is a glycosylation site (N-linked (GlcNAc...) asparagine). A helical transmembrane segment spans residues 189–209; it reads LERVEYLFLIIFTVEAFLKVI. Over 210–218 the chain is Cytoplasmic; the sequence is AYGLLFHPN. Residues 219–239 form a helical membrane-spanning segment; it reads AYLRNGWNLLDFIIVVVGLFS. The Extracellular portion of the chain corresponds to 240-262; sequence AILEQATKADGANALGGKGAGFD. Residues 263 to 281 traverse the membrane as a helical segment; that stretch reads VKALRAFRVLRPLRLVSGV. At 282-298 the chain is on the cytoplasmic side; the sequence is PSLQVVLNSIIKAMVPL. A helical membrane pass occupies residues 299–320; it reads LHIALLVLFVIIIYAIIGLELF. Residues 321–380 lie on the Extracellular side of the membrane; that stretch reads MGKMHKTCYNQEGIIDVPAEEDPSPCALETGHGRQCQNGTVCKPGWDGPKHGITNFDNFA. Cystine bridges form between C328-C356 and C346-C362. Residue N358 is glycosylated (N-linked (GlcNAc...) asparagine). The segment at residues 381-402 is an intramembrane region (pore-forming); the sequence is FAMLTVFQCITMEGWTDVLYWM. The Selectivity filter of repeat I motif lies at 391 to 394; sequence TMEG. A Ca(2+)-binding site is contributed by E393. Over 403–410 the chain is Extracellular; that stretch reads QDAMGYEL. A helical transmembrane segment spans residues 411 to 431; sequence PWVYFVSLVIFGSFFVLNLVL. Over 432–554 the chain is Cytoplasmic; sequence GVLSGEFSKE…RKCRAAVKSN (123 aa). Residues 458 to 475 are AID/alpha-interaction domain; mediates interaction with the beta subunit; sequence QQLEEDLKGYLDWITQAE. A disordered region spans residues 479-511; sequence PENEDEGMDEDKPRNMSMPTSETESVNTENVAG. The span at 495–508 shows a compositional bias: polar residues; that stretch reads SMPTSETESVNTEN. S499 carries the post-translational modification Phosphoserine. Position 506 is a phosphothreonine (T506). An II repeat occupies 540 to 786; the sequence is NRFCRRKCRA…LFLAIAVDNL (247 aa). The helical transmembrane segment at 555–573 threads the bilayer; that stretch reads VFYWLVIFLVFLNTLTIAS. At 574–584 the chain is on the extracellular side; the sequence is EHYNQPHWLTE. Residues 585 to 605 traverse the membrane as a helical segment; sequence VQDTANKALLALFTAEMLLKM. Residues 606–616 lie on the Cytoplasmic side of the membrane; sequence YSLGLQAYFVS. A helical membrane pass occupies residues 617-636; sequence LFNRFDCFIVCGGILETILV. Residues 637–645 are Extracellular-facing; sequence ETKIMSPLG. A helical membrane pass occupies residues 646–664; it reads ISCWRCVRLLRIFKITRYW. Residues 665–683 are Cytoplasmic-facing; that stretch reads NSLSNLVASLLNSLRSIAS. The chain crosses the membrane as a helical span at residues 684 to 703; it reads LLLLLFLFIIIFSLLGMQLF. Residues 704 to 723 are Extracellular-facing; it reads GGKFNFDEMQTRRSTFDNFP. The pore-forming intramembrane region spans 724 to 745; sequence QSLLTVFQILTGEDWNSVMYDG. The Selectivity filter of repeat II signature appears at 734–737; the sequence is TGED. E736 lines the Ca(2+) pocket. Residues 746–755 lie on the Extracellular side of the membrane; it reads IMAYGGPSFP. Residues 756 to 775 form a helical membrane-spanning segment; that stretch reads GMLVCIYFIILFISPNYILL. At 776-930 the chain is on the cytoplasmic side; sequence NLFLAIAVDN…LQCHRIVNDT (155 aa). The segment at 794 to 891 is disordered; sequence SAQKEEEEEK…EMPVGPRPRP (98 aa). The segment covering 813-836 has biased composition (basic and acidic residues); the sequence is SPEKKQEVMEKPAVEESKEEKIEL. 2 positions are modified to phosphoserine: S838 and S845. An interaction with STAC2 region spans residues 859-906; the sequence is SENEDKSPHSNPDTAGEEDEEEPEMPVGPRPRPLSELHLKEKAVPMPE. Acidic residues predominate over residues 873 to 882; the sequence is AGEEDEEEPE. The III repeat unit spans residues 917–1198; that stretch reads NRFRLQCHRI…IFVGFVIVTF (282 aa). The chain crosses the membrane as a helical span at residues 931–949; that stretch reads IFTNLILFFILLSSISLAA. The Extracellular segment spans residues 950–961; the sequence is EDPVQHTSFRNH. A helical transmembrane segment spans residues 962–981; it reads ILFYFDIVFTTIFTIEIALK. The Cytoplasmic portion of the chain corresponds to 982 to 997; it reads MTAYGAFLHKGSFCRN. Residues 998-1016 traverse the membrane as a helical segment; the sequence is YFNILDLLVVSVSLISFGI. Residues 1017–1023 lie on the Extracellular side of the membrane; that stretch reads QSSAINV. Residues 1024–1041 traverse the membrane as a helical segment; sequence VKILRVLRVLRPLRINRA. Residues 1042–1060 are Cytoplasmic-facing; it reads KGLKHVVQCVFVAIRTIGN. The chain crosses the membrane as a helical span at residues 1061–1080; the sequence is IVIVTTLLQFMFACIGVQLF. Residues 1081–1130 lie on the Extracellular side of the membrane; the sequence is KGKLYTCSDSSKQTEAESKGNYITYKTGEVDHPIIQPRSWENSKFDFDNV. Residues 1118 to 1207 form a dihydropyridine binding region; sequence RSWENSKFDF…FQEQGEQEYK (90 aa). The segment at residues 1131–1151 is an intramembrane region (pore-forming); the sequence is LAAMMALFTVSTFEGWPELLY. The short motif at 1142–1145 is the Selectivity filter of repeat III element; sequence TFEG. Residue E1144 participates in Ca(2+) binding. Over 1152–1168 the chain is Extracellular; the sequence is RSIDSHTEDKGPIYNYR. The helical transmembrane segment at 1169–1190 threads the bilayer; it reads VEISIFFIIYIIIIAFFMMNIF. Over 1191-1248 the chain is Cytoplasmic; it reads VGFVIVTFQEQGEQEYKNCELDKNQRQCVEYALKARPLPRYIPKNQHQYKVWYVVNST. An IV repeat occupies 1235–1508; sequence NQHQYKVWYV…LFVAVIMDNF (274 aa). The helical transmembrane segment at 1249–1270 threads the bilayer; the sequence is YFEYLMFVLILLNTICLAMQHY. The Extracellular segment spans residues 1271-1278; that stretch reads GQSCLFKI. A helical transmembrane segment spans residues 1279–1300; it reads AMNILNMLFTGLFTVEMILKLI. Topologically, residues 1301–1310 are cytoplasmic; it reads AFKPKHYFCD. The helical transmembrane segment at 1311–1330 threads the bilayer; it reads AWNTFDALIVVGSIVDIAIT. At 1331–1353 the chain is on the extracellular side; the sequence is EVHPAEHTQCSPSMSAEENSRIS. The chain crosses the membrane as a helical span at residues 1354–1372; that stretch reads ITFFRLFRVMRLVKLLSRG. The Cytoplasmic portion of the chain corresponds to 1373 to 1390; it reads EGIRTLLWTFIKSFQALP. The helical transmembrane segment at 1391–1411 threads the bilayer; the sequence is YVALLIVMLFFIYAVIGMQVF. Residues 1412-1433 lie on the Extracellular side of the membrane; sequence GKIALNDTTEINRNNNFQTFPQ. N1417 carries an N-linked (GlcNAc...) asparagine glycan. Positions 1434 to 1452 form an intramembrane region, pore-forming; sequence AVLLLFRCATGEAWQDIML. A Selectivity filter of repeat IV motif is present at residues 1443–1446; it reads TGEA. The Extracellular portion of the chain corresponds to 1453–1480; the sequence is ACMPGKKCAPESEPSNSTEGETPCGSSF. Residues 1459–1527 form a dihydropyridine binding region; the sequence is KCAPESEPSN…LGPHHLDEFK (69 aa). Cysteines 1460 and 1476 form a disulfide. N1468 carries N-linked (GlcNAc...) asparagine glycosylation. A phenylalkylamine binding region spans residues 1473 to 1515; that stretch reads ETPCGSSFAVFYFISFYMLCAFLIINLFVAVIMDNFDYLTRDW. A helical membrane pass occupies residues 1481 to 1505; that stretch reads AVFYFISFYMLCAFLIINLFVAVIM. The Cytoplasmic portion of the chain corresponds to 1506-2169; sequence DNFDYLTRDW…PDSRSYVSNL (664 aa). An important for interaction with STAC1, STAC2 and STAC3 region spans residues 1640 to 1667; that stretch reads DEVTVGKFYATFLIQEYFRKFKKRKEQG. The interval 1640 to 1673 is calmodulin-binding; that stretch reads DEVTVGKFYATFLIQEYFRKFKKRKEQGLVGKPS. A calmodulin-binding IQ region region spans residues 1646-1666; sequence KFYATFLIQEYFRKFKKRKEQ. Residues 1680–1699 form an important for localization in at the junctional membrane region; the sequence is LQAGLRTLHDIGPEIRRAIS. S1699 and S1720 each carry phosphoserine. Polar residues-rich tracts occupy residues 1761–1770 and 1780–1792; these read KTGNNQADTE and STFT…STGS. The segment at 1761 to 1793 is disordered; the sequence is KTGNNQADTESPSHEKLVDSTFTPSSYSSTGSN. Residue S1927 is modified to Phosphoserine; by PKA. The disordered stretch occupies residues 1970–1998; sequence RSHSPSTFPRPRPTPPVTPGSRGRPLQPI. The segment covering 1977-1987 has biased composition (pro residues); it reads FPRPRPTPPVT.

This sequence belongs to the calcium channel alpha-1 subunit (TC 1.A.1.11) family. CACNA1C subfamily. As to quaternary structure, component of a calcium channel complex consisting of a pore-forming alpha subunit (CACNA1C) and ancillary beta, gamma and delta subunits. The channel complex contains alpha, beta, gamma and delta subunits in a 1:1:1:1 ratio, i.e. it contains only one of each type of subunit. CACNA1C channel activity is modulated by ancillary subunits, such as CACNB1, CACNB2, CACNB3, CACNA2D1 and CACNA2D4. Interacts with the gamma subunits CACNG4, CACNG6, CACNG7 and CACNG8. Interacts with CACNB1. Interacts with CACNB2. Identified in a complex with CACNA2D4 and CACNB3. Interacts with CACNB3. Interacts with CACNA2D1. Interacts with CACNA2D4. Interacts with CALM1. Interacts (via the N-terminus and the C-terminal C and IQ motifs) with CABP1; this inhibits Ca(2+)-dependent channel inactivation. The binding via the C motif is calcium independent whereas the binding via IQ requires the presence of calcium and is mutually exclusive with calmodulin binding. The binding to the cytoplasmic N-terminal domain is calcium independent but is essential for the channel modulation. Interacts (via C-terminal CDB motif) with CABP5; in a calcium-dependent manner. Interacts with CIB1; the interaction increases upon cardiomyocytes hypertrophy. Interacts with STAC2 and STAC3; this inhibits channel inactivation. In terms of processing, phosphorylation by PKA at Ser-1927 activates the channel. Elevated levels of blood glucose lead to increased phosphorylation by PKA. Is also phosphorylated in vitro by CaM-kinase II, PKC and CGPK. Detected in hippocampus and brain cortex, on neuronal cell bodies and dendrites, and in post-synaptic density in brain (at protein level). Isoforms 4 and 5 are expressed throughout the central nervous system, with highest levels in the olfactory bulb and cerebellum. Also expressed in heart, pituitary, adrenal gland, liver, kidney, and in a much lesser extent in testes and spleen.

It is found in the cell membrane. Its subcellular location is the sarcolemma. The protein resides in the perikaryon. The protein localises to the postsynaptic density membrane. It localises to the cell projection. It is found in the dendrite. Its subcellular location is the T-tubule. The catalysed reaction is Ca(2+)(in) = Ca(2+)(out). Its activity is regulated as follows. Inhibited by dihydropyridines (DHP), such as isradipine. Inhibited by nifedipine. Channel activity is regulated by Ca(2+) and calmodulin. Binding of STAC1, STAC2 or STAC3 to a region that overlaps with the calmodulin binding site inhibits channel inactivation by Ca(2+) and calmodulin. Binding of calmodulin or CABP1 at the same regulatory sites results in opposite effects on the channel function. Shear stress and pressure increases calcium channel activity. Pore-forming, alpha-1C subunit of the voltage-gated calcium channel that gives rise to L-type calcium currents. Mediates influx of calcium ions into the cytoplasm, and thereby triggers calcium release from the sarcoplasm. Plays an important role in excitation-contraction coupling in the heart. Required for normal heart development and normal regulation of heart rhythm. Required for normal contraction of smooth muscle cells in blood vessels and in the intestine. Essential for normal blood pressure regulation via its role in the contraction of arterial smooth muscle cells. Long-lasting (L-type) calcium channels belong to the 'high-voltage activated' (HVA) group. In Rattus norvegicus (Rat), this protein is Voltage-dependent L-type calcium channel subunit alpha-1C (Cacna1c).